The chain runs to 239 residues: tRNA (guanine-N(1)-)-methyltransferase (239 aa).

Residues Gly109 and 128-133 (IGDYVL) contribute to the S-adenosyl-L-methionine site.

It belongs to the RNA methyltransferase TrmD family. As to quaternary structure, homodimer.

It is found in the cytoplasm. It carries out the reaction guanosine(37) in tRNA + S-adenosyl-L-methionine = N(1)-methylguanosine(37) in tRNA + S-adenosyl-L-homocysteine + H(+). Specifically methylates guanosine-37 in various tRNAs. The chain is tRNA (guanine-N(1)-)-methyltransferase from Thermus thermophilus (strain ATCC 27634 / DSM 579 / HB8).